Here is a 1463-residue protein sequence, read N- to C-terminus: MEDDDVADFFDFSKPFKRTVVSGGYINGAVKPQKLNIQTLPERAHQGTEYAEKFCREEEARLMEGWVDETLNKSTASRLEQVDDMSSVMEEDTQHLQRVRAKELMEPLFSRYNFTVTPNRLTIHQSKQDILKAIRENPVVVLQGMTGCGKTTQVPQYLLEDAYNRKEWCNIVVTQPRKIAASSIARRVAEERNCALGSLVGFKVGLKEMVSEDTRLTYVTTGVLLNKLITSKSISSYTHIILDEVHEREVDMDFLLIIVRRLLATMRNTKIILMSATIESSEFAQYFKIPGPNSLFAPQLAVSNVTQHDVSVYYLEDLEKLRVDFTIKYEQPDVHEKMYFLAAKVAVVCDRFIDEFESASTIDYKPSIIMFLPGINEIERMAEVLRNFLGDSNVNSQEQTKFTILKLHSMLPSEEQALVFTKPSPGYRKVILSTNIAESSITIPDVKFVIDFCLHRVLVADTLNNFTTLRTQWASRNNCIQRAGRCGRVMNGRVYRLVNKHFFEHGMAQSIEPEMVRCPLSNVVLKTKLLDMGPPHTILALAMSPPNLSDVSNTVLQLKELGALLRTAKGVYDLQDGDITYLGNIMSTLPLDIHLAKLVVLGYVFSVLEEAIVIAAGMNVKNIFCQLRTIEALRVKRHFANGSASDGIAILNAYNWWRSIREQGTGGDTTDWCNRYMLDRKSLIEMAELVQEITMRLKTANIRVVSGANNARWTDRERTVVLKVVMAGAFYPNYFIPTCVTDRELSDKMVYTEIGGRDPFSTVFFCGFDHSNYIGPLYRNEIRALLTERKPTSEKHQVKVEFERSTNKIFVQFQYPPDQQSGKSLYEERNSADRVHPGVYEAIKLRQLRHNQSELLVMHHNDAVAYATEHRLGVWRNHEWHPRSVEIPNAHLSVEPPIHWNRVTATVTHVEHPNKFYLRPHDEKNDNIYHDIMEKLNGCDAVLRAFPEGYAFKQRDIVAAPLPNMVTGKMARAKLLQQCLVRGVEHWTVFFMDFGLTAGVSVKSFRQLRGTPLDMFTKFPDRVFLASLAEVQPSAVRSPKDVWMEETIKHFRQLVHGQQFDVEVYSVVNRVTMVVLRHNPDDPIDLTVNRALINSHHAQLSEESYMSKMNHEKRKRVQFEMELDPMYKTQILNDISEQQRFLEDDDVDSLELPRDLLKVRLMLRGPYSPLEVKCSSTVFSGYRKPVIIEKESLNSVLLDTNPQNTHEKLLVAGCVNETSNSRLIARMTTMMPNIPGLPALMTLIFAPTCLVKKDPDETRVVGLLAGLGTDPRTGESMYPEHDMSLAVDIAIDDDDIADINALRYTMDSILHGGHNEQTPMFGEYSIESLMVKVKDYLIKILQRDRPIQDNRSMAHDFSWVKENPSTSTSSQKRLRSTAIDIYTKAIFPLYHNLNLRPMTADRMEFLRQHCKDLHLLTQSRVPLPKGGITCRLCNVTLESDHTLRIHFYSKLHCDLELKINYRR.

One can recognise a Helicase ATP-binding domain in the interval Leu-131–Phe-296. Gly-144–Thr-151 serves as a coordination point for ATP. The short motif at Asp-243 to His-246 is the DEAH box element. In terms of domain architecture, Helicase C-terminal spans Val-348–Asp-531. Residues Ala-951–Phe-1016 form the Tudor domain.

This sequence belongs to the DEAD box helicase family. DEAH subfamily.

The protein localises to the cytoplasm. The catalysed reaction is ATP + H2O = ADP + phosphate + H(+). Probable ATP-binding RNA helicase which plays a central role during gametogenesis by repressing transposable elements and preventing their mobilization, which is essential for the germline integrity. Acts via the piRNA metabolic process, which mediates the repression of transposable elements during meiosis by forming complexes composed of piRNAs and Piwi proteins and govern the methylation and subsequent repression of transposons. The protein is Probable ATP-dependent RNA helicase spindle-E (spn-E) of Anopheles gambiae (African malaria mosquito).